The chain runs to 224 residues: GrpE protein homolog 2, mitochondrial (224 aa).

A mitochondrion-targeting transit peptide spans 1 to 31; sequence MAARLLWAVRRRMQPLAAHAASEGRGWLHPF. N6-acetyllysine is present on lysine 141.

The protein belongs to the GrpE family. In terms of assembly, probable component of the PAM complex at least composed of a mitochondrial HSP70 protein, GRPEL1 or GRPEL2, TIMM44, TIMM16/PAM16 and TIMM14/DNAJC19.

It is found in the mitochondrion matrix. Its function is as follows. Essential component of the PAM complex, a complex required for the translocation of transit peptide-containing proteins from the inner membrane into the mitochondrial matrix in an ATP-dependent manner. Seems to control the nucleotide-dependent binding of mitochondrial HSP70 to substrate proteins. Stimulates ATPase activity of mt-HSP70. May also serve to modulate the interconversion of oligomeric (inactive) and monomeric (active) forms of mt-HSP70. The sequence is that of GrpE protein homolog 2, mitochondrial (GRPEL2) from Bos taurus (Bovine).